We begin with the raw amino-acid sequence, 447 residues long: UDP-glycosyltransferase 79B9 (447 aa).

Residues Ser-260, 319–321 (VQQ), 336–344 (HCGFGSMWE), and 358–361 (LCDQ) contribute to the UDP-alpha-D-glucose site.

It belongs to the UDP-glycosyltransferase family.

In Arabidopsis thaliana (Mouse-ear cress), this protein is UDP-glycosyltransferase 79B9 (UGT79B9).